Consider the following 808-residue polypeptide: Phenylalanine--tRNA ligase beta subunit (808 aa).

The 116-residue stretch at 40–155 folds into the tRNA-binding domain; sequence NQGATGVVVG…DDVEIGSDAL (116 aa). Residues 409–484 form the B5 domain; the sequence is IEEPVVSLNL…RLYGYDNIPT (76 aa). Mg(2+) is bound by residues aspartate 462, aspartate 468, glutamate 471, and glutamate 472. Residues 714–807 enclose the FDX-ACB domain; that stretch reads PRFPAISRDI…LEASTGAVLR (94 aa).

It belongs to the phenylalanyl-tRNA synthetase beta subunit family. Type 1 subfamily. As to quaternary structure, tetramer of two alpha and two beta subunits. Mg(2+) is required as a cofactor.

It localises to the cytoplasm. It catalyses the reaction tRNA(Phe) + L-phenylalanine + ATP = L-phenylalanyl-tRNA(Phe) + AMP + diphosphate + H(+). The polypeptide is Phenylalanine--tRNA ligase beta subunit (pheT) (Halalkalibacterium halodurans (strain ATCC BAA-125 / DSM 18197 / FERM 7344 / JCM 9153 / C-125) (Bacillus halodurans)).